The primary structure comprises 308 residues: Putative transcription elongation factor S-II (308 aa).

In terms of domain architecture, TFIIS N-terminal spans 5-84 (EETQSLCKQV…KDWKNVVDGK (80 aa)). The segment at 82–126 (DGKSKSQDDGGAPPAKKHRKESVEEAKPEKKKIEAPYKRPEPSSR) is disordered. Residues 102-125 (ESVEEAKPEKKKIEAPYKRPEPSS) are compositionally biased toward basic and acidic residues. The region spanning 148 to 263 (TRLKSAQLLL…EHQMSVQQGT (116 aa)) is the TFIIS central domain. The TFIIS-type zinc finger occupies 266 to 306 (DMFKCGKCGKKNCTYTQLQTRSSDEPMTTFVFCLECGNRWK). The Zn(2+) site is built by Cys-270, Cys-273, Cys-298, and Cys-301.

It belongs to the TFS-II family.

The protein resides in the nucleus. In terms of biological role, necessary for efficient RNA polymerase II transcription elongation past template-encoded arresting sites. The arresting sites in DNA have the property of trapping a certain fraction of elongating RNA polymerases that pass through, resulting in locked ternary complexes. Cleavage of the nascent transcript by S-II allows the resumption of elongation from the new 3'-terminus. This is Putative transcription elongation factor S-II from Caenorhabditis elegans.